Consider the following 308-residue polypeptide: D-alanine--D-alanine ligase (308 aa).

An ATP-grasp domain is found at 105 to 302 (KAIFKALGLD…FPELCERILD (198 aa)). 133-188 (DLPFGVPCVVKPAGEGSSVGVQIVKDAARLADACREAARYKGDVVVERYVKGTEVN) contacts ATP. Positions 256, 269, and 271 each coordinate Mg(2+).

Belongs to the D-alanine--D-alanine ligase family. Requires Mg(2+) as cofactor. Mn(2+) serves as cofactor.

It is found in the cytoplasm. It carries out the reaction 2 D-alanine + ATP = D-alanyl-D-alanine + ADP + phosphate + H(+). It functions in the pathway cell wall biogenesis; peptidoglycan biosynthesis. Functionally, cell wall formation. The polypeptide is D-alanine--D-alanine ligase (Anaeromyxobacter sp. (strain Fw109-5)).